The chain runs to 103 residues: Large ribosomal subunit protein bL21 (103 aa).

Belongs to the bacterial ribosomal protein bL21 family. In terms of assembly, part of the 50S ribosomal subunit. Contacts protein L20.

Functionally, this protein binds to 23S rRNA in the presence of protein L20. The polypeptide is Large ribosomal subunit protein bL21 (Amoebophilus asiaticus (strain 5a2)).